A 783-amino-acid chain; its full sequence is MTAPEKPVKQEEMAALDVDGGGGGGGHGEYLQQQQQQQQQHGNGAAAAAAQDTQPSPLALLAATCSKIGPPSPGDDDEEAAVAAAAGVPAAAAGATGDLASAQLGGAPNRWEVLSATPTTIKDEAGNLVQIPGAATSSGQYVLPLQNLQNQQIFSVAPGSDSSNGTVSNVQYQVIPQIQSTDAQQVQIGFTGSSDNGGINQENSQIQIIPGSNQTLLASGTPPANIQNLIPQTGQVQVQGVAIGGSSFPGQTQVVANVPLGLPGNITFVPINSVDLDSLGLSGSSQTMTAGINADGHLINTGQAMDSSDNSERTGERVSPDVNETNADTDLFVPTSSSSQLPVTIDSTGILQQNTNSLTTTSGQVHSSDLQGNYIQSPVSEETQAQNIQVSTAQPVVQHLQLQDSQQPTSQAQIVQGITPQTIHGVQASGQNISQQALQNLQLQLNPGTFLIQAQTVTPSGQITWQTFQVQGVQNLQNLQIQNTAAQQITLTPVQTLTLGQVAAGGALTSTPVSLSTGQLPNLQTVTVNSIDSTGIQLHPGENADSPADIRIKEEEPDPEEWQLSGDSTLNTNDLTHLRVQVVDEEGDQQHQEGKRLRRVACTCPNCKEGGGRGTNLGKKKQHICHIPGCGKVYGKTSHLRAHLRWHSGERPFICNWMFCGKRFTRSDELQRHRRTHTGEKKFVCPECSKRFMRSDHLAKHIKTHQNKKVIHSSSTVLASVEAGRDDALITAGGTTLILANIQQGSVSGIGTVNTSATSNQDILTNTEIPLQLVTVSGNETME.

Positions 1 to 12 (MTAPEKPVKQEE) are enriched in basic and acidic residues. Residues 1–55 (MTAPEKPVKQEEMAALDVDGGGGGGGHGEYLQQQQQQQQQHGNGAAAAAAQDTQP) are disordered. Positions 19 to 28 (DGGGGGGGHG) are enriched in gly residues. Low complexity predominate over residues 29–51 (EYLQQQQQQQQQHGNGAAAAAAQ). Phosphoserine is present on Ser-72. A Glycyl lysine isopeptide (Lys-Gly) (interchain with G-Cter in SUMO) cross-link involves residue Lys-122. The tract at residues 140–239 (QYVLPLQNLQ…IPQTGQVQVQ (100 aa)) is transactivation domain (Gln-rich). The disordered stretch occupies residues 302–340 (GQAMDSSDNSERTGERVSPDVNETNADTDLFVPTSSSSQ). A compositionally biased stretch (basic and acidic residues) spans 310–319 (NSERTGERVS). The span at 322 to 340 (VNETNADTDLFVPTSSSSQ) shows a compositional bias: polar residues. The transactivation domain (Gln-rich) stretch occupies residues 352-501 (QQNTNSLTTT…TPVQTLTLGQ (150 aa)). A 9aaTAD motif is present at residues 463–471 (ITWQTFQVQ). The segment at 536-622 (IQLHPGENAD…RGTNLGKKKQ (87 aa)) is repressor domain. Lys-553 carries the N6-acetyllysine; alternate modification. Lys-553 is covalently cross-linked (Glycyl lysine isopeptide (Lys-Gly) (interchain with G-Cter in SUMO); alternate). Residue Lys-553 forms a Glycyl lysine isopeptide (Lys-Gly) (interchain with G-Cter in SUMO1); alternate linkage. Lys-553 is covalently cross-linked (Glycyl lysine isopeptide (Lys-Gly) (interchain with G-Cter in SUMO2); alternate). 2 positions are modified to phosphoserine: Ser-565 and Ser-568. Residue Lys-595 forms a Glycyl lysine isopeptide (Lys-Gly) (interchain with G-Cter in SUMO2) linkage. The C2H2-type 1 zinc-finger motif lies at 623-647 (HICHIPGCGKVYGKTSHLRAHLRWH). Ser-648 carries the phosphoserine modification. C2H2-type zinc fingers lie at residues 653–677 (FICN…RRTH) and 683–705 (FVCP…IKTH).

It belongs to the Sp1 C2H2-type zinc-finger protein family. In terms of assembly, interacts with HLTF; the interaction may be required for basal transcriptional activity of HLTF. Interacts with HDAC1; the interaction deacetylates SP3 and regulates its transcriptional activity. Interacts with HDAC2 (preferably the CK2-phosphorylated form); the interaction deacetylates SP3 and regulates its transcriptional activity. Ceramides can also regulate acetylation/deacetylation events through altering the interaction of HDAC with SP3. Interacts with MEIS2 isoform Meis2D and PBX1 isoform PBX1a. Acetylated by histone acetyltransferase p300, deacetylated by HDACs. Acetylation/deacetylation states regulate transcriptional activity. Acetylation appears to activate transcription. Alternate sumoylation and acetylation at Lys-553 also control transcriptional activity. Post-translationally, sumoylated on all isoforms. Sumoylated on 2 sites in longer isoforms with Lys-553 being the major site. Sumoylation at this site promotes nuclear localization to the nuclear periphery, nuclear dots and PML nuclear bodies. Sumoylation on Lys-553 represses the transactivation activity, except for the largest isoform which has little effect on transactivation. Alternate sumoylation and acetylation at Lys-553 also control transcriptional activity.

It localises to the nucleus. Its subcellular location is the PML body. Its function is as follows. Transcriptional factor that can act as an activator or repressor depending on isoform and/or post-translational modifications. Binds to GT and GC boxes promoter elements. Competes with SP1 for the GC-box promoters. Weak activator of transcription but can activate a number of genes involved in different processes such as cell-cycle regulation, hormone-induction and house-keeping. The protein is Transcription factor Sp3 (Sp3) of Mus musculus (Mouse).